Consider the following 126-residue polypeptide: Protein ApaG (126 aa).

Positions 2 to 126 (DVIQPCIKIQ…FRLAIPNVLN (125 aa)) constitute an ApaG domain.

This Vibrio campbellii (strain ATCC BAA-1116) protein is Protein ApaG.